The chain runs to 93 residues: Acylphosphatase (93 aa).

The 87-residue stretch at 7–93 (RAHVFVSGTV…EGIDGFHIRR (87 aa)) folds into the Acylphosphatase-like domain. Active-site residues include arginine 22 and asparagine 40.

It belongs to the acylphosphatase family.

The catalysed reaction is an acyl phosphate + H2O = a carboxylate + phosphate + H(+). The chain is Acylphosphatase (acyP) from Haloquadratum walsbyi (strain DSM 16790 / HBSQ001).